The following is a 197-amino-acid chain: GTP cyclohydrolase-2 (197 aa).

49–53 (RVHSE) is a binding site for GTP. Zn(2+)-binding residues include Cys54, Cys65, and Cys67. GTP contacts are provided by residues Gln70, 92–94 (EGR), and Thr114. Asp126 (proton acceptor) is an active-site residue. The active-site Nucleophile is Arg128. 2 residues coordinate GTP: Thr149 and Lys154.

Belongs to the GTP cyclohydrolase II family. In terms of assembly, homodimer. The cofactor is Zn(2+).

The enzyme catalyses GTP + 4 H2O = 2,5-diamino-6-hydroxy-4-(5-phosphoribosylamino)-pyrimidine + formate + 2 phosphate + 3 H(+). It participates in cofactor biosynthesis; riboflavin biosynthesis; 5-amino-6-(D-ribitylamino)uracil from GTP: step 1/4. In terms of biological role, catalyzes the conversion of GTP to 2,5-diamino-6-ribosylamino-4(3H)-pyrimidinone 5'-phosphate (DARP), formate and pyrophosphate. This is GTP cyclohydrolase-2 from Pectobacterium atrosepticum (strain SCRI 1043 / ATCC BAA-672) (Erwinia carotovora subsp. atroseptica).